The sequence spans 356 residues: Uroporphyrinogen decarboxylase (356 aa).

Coproporphyrinogen I is bound by residues arginine 33, alanine 35, arginine 37, arginine 46, aspartate 82, tyrosine 159, serine 214, and histidine 334. 3 residues coordinate coproporphyrinogen III: arginine 33, alanine 35, and arginine 37. Residues aspartate 82, tyrosine 159, serine 214, and histidine 334 each coordinate coproporphyrinogen III.

It belongs to the uroporphyrinogen decarboxylase family. As to quaternary structure, homodimer.

The protein localises to the cytoplasm. It localises to the cytosol. It catalyses the reaction uroporphyrinogen III + 4 H(+) = coproporphyrinogen III + 4 CO2. The protein operates within porphyrin-containing compound metabolism; protoporphyrin-IX biosynthesis; coproporphyrinogen-III from 5-aminolevulinate: step 4/4. Catalyzes the decarboxylation of four acetate groups of uroporphyrinogen-III to yield coproporphyrinogen-III. The protein is Uroporphyrinogen decarboxylase of Drosophila melanogaster (Fruit fly).